Consider the following 62-residue polypeptide: Photosystem II reaction center protein Z (62 aa).

2 helical membrane passes run 8 to 28 (ALLA…VVFA) and 41 to 61 (FSGL…NSFV).

It belongs to the PsbZ family. In terms of assembly, PSII is composed of 1 copy each of membrane proteins PsbA, PsbB, PsbC, PsbD, PsbE, PsbF, PsbH, PsbI, PsbJ, PsbK, PsbL, PsbM, PsbT, PsbY, PsbZ, Psb30/Ycf12, at least 3 peripheral proteins of the oxygen-evolving complex and a large number of cofactors. It forms dimeric complexes.

It localises to the plastid. The protein localises to the chloroplast thylakoid membrane. Controls the interaction of photosystem II (PSII) cores with the light-harvesting antenna, aiding in the dissipation of excitation energy within PSII. PSII is a light-driven water plastoquinone oxidoreductase, using light energy to abstract electrons from H(2)O, generating a proton gradient subsequently used for ATP formation. This Chlamydomonas reinhardtii (Chlamydomonas smithii) protein is Photosystem II reaction center protein Z.